Reading from the N-terminus, the 357-residue chain is UDP-N-acetylglucosamine--N-acetylmuramyl-(pentapeptide) pyrophosphoryl-undecaprenol N-acetylglucosamine transferase (357 aa).

Residues 11–13, N123, R159, S187, I241, 260–265, and Q286 each bind UDP-N-acetyl-alpha-D-glucosamine; these read TGG and ALTVAE.

This sequence belongs to the glycosyltransferase 28 family. MurG subfamily.

It is found in the cell inner membrane. The catalysed reaction is di-trans,octa-cis-undecaprenyl diphospho-N-acetyl-alpha-D-muramoyl-L-alanyl-D-glutamyl-meso-2,6-diaminopimeloyl-D-alanyl-D-alanine + UDP-N-acetyl-alpha-D-glucosamine = di-trans,octa-cis-undecaprenyl diphospho-[N-acetyl-alpha-D-glucosaminyl-(1-&gt;4)]-N-acetyl-alpha-D-muramoyl-L-alanyl-D-glutamyl-meso-2,6-diaminopimeloyl-D-alanyl-D-alanine + UDP + H(+). It functions in the pathway cell wall biogenesis; peptidoglycan biosynthesis. In terms of biological role, cell wall formation. Catalyzes the transfer of a GlcNAc subunit on undecaprenyl-pyrophosphoryl-MurNAc-pentapeptide (lipid intermediate I) to form undecaprenyl-pyrophosphoryl-MurNAc-(pentapeptide)GlcNAc (lipid intermediate II). The polypeptide is UDP-N-acetylglucosamine--N-acetylmuramyl-(pentapeptide) pyrophosphoryl-undecaprenol N-acetylglucosamine transferase (Aromatoleum aromaticum (strain DSM 19018 / LMG 30748 / EbN1) (Azoarcus sp. (strain EbN1))).